Here is a 102-residue protein sequence, read N- to C-terminus: MEIEILGQEDNPLLHRTDVQFKIVHDDATPSRLSVRDSLAAKLDKDSEEVVVHELDTKFGMRKTRGRAKVYDSPAQAAEVEHDHMLERNKIGADDADAEEAE.

The segment at 70-102 (VYDSPAQAAEVEHDHMLERNKIGADDADAEEAE) is disordered. The segment covering 79–93 (EVEHDHMLERNKIGA) has biased composition (basic and acidic residues).

The protein belongs to the eukaryotic ribosomal protein eS24 family.

The sequence is that of Small ribosomal subunit protein eS24 from Halobacterium salinarum (strain ATCC 29341 / DSM 671 / R1).